The primary structure comprises 413 residues: Queuine tRNA-ribosyltransferase accessory subunit 2 (413 aa).

Residues 298–321 form a disordered region; sequence LEKSETSGAERNGDVGAESEEPDA. Zn(2+) contacts are provided by Cys349, Cys351, Cys354, and His380.

Belongs to the queuine tRNA-ribosyltransferase family. QTRT2 subfamily. As to quaternary structure, heterodimer of a catalytic subunit qtrt1 and an accessory subunit qtrt2. It depends on Zn(2+) as a cofactor.

It is found in the cytoplasm. It localises to the mitochondrion outer membrane. Non-catalytic subunit of the queuine tRNA-ribosyltransferase (TGT) that catalyzes the base-exchange of a guanine (G) residue with queuine (Q) at position 34 (anticodon wobble position) in tRNAs with GU(N) anticodons (tRNA-Asp, -Asn, -His and -Tyr), resulting in the hypermodified nucleoside queuosine (7-(((4,5-cis-dihydroxy-2-cyclopenten-1-yl)amino)methyl)-7-deazaguanosine). The polypeptide is Queuine tRNA-ribosyltransferase accessory subunit 2 (Xenopus tropicalis (Western clawed frog)).